The following is a 496-amino-acid chain: Hexokinase-2 (496 aa).

The helical transmembrane segment at 4–24 (ATVGAVVVGTAAAVAVAALIM) threads the bilayer. The Hexokinase domain maps to 35-487 (ARARAILKEF…SGIGAALLAA (453 aa)). Positions 90–228 (TGDEGGVFYA…EIDMRVSALV (139 aa)) are hexokinase small subdomain. ADP-binding residues include G104, T105, and N106. 4 residues coordinate D-glucose: T194, K195, N229, and D230. The interval 229 to 476 (NDTVGTLAGG…TSIVFKHAND (248 aa)) is hexokinase large subdomain. T253 is an ADP binding site. 3 residues coordinate D-glucose: N256, E284, and E315. An ADP-binding site is contributed by G441.

It belongs to the hexokinase family.

It is found in the plastid. Its subcellular location is the chloroplast outer membrane. The enzyme catalyses a D-hexose + ATP = a D-hexose 6-phosphate + ADP + H(+). The catalysed reaction is D-fructose + ATP = D-fructose 6-phosphate + ADP + H(+). It catalyses the reaction D-glucose + ATP = D-glucose 6-phosphate + ADP + H(+). Its pathway is carbohydrate metabolism; hexose metabolism. It participates in carbohydrate degradation; glycolysis; D-glyceraldehyde 3-phosphate and glycerone phosphate from D-glucose: step 1/4. In terms of biological role, fructose and glucose phosphorylating enzyme. May be involved in the phosphorylation of glucose during the export from plastids to cytosol. Seems neither to be involved in cell sugar sensing nor in carbohydrate metabolism in tuber. This chain is Hexokinase-2 (HXK2), found in Solanum tuberosum (Potato).